We begin with the raw amino-acid sequence, 307 residues long: Trehalose transport system permease protein SugA (307 aa).

A run of 6 helical transmembrane segments spans residues 25–45 (LAFM…AYPI), 89–109 (LAIT…LALV), 123–143 (AVLI…YYAW), 168–188 (LGIV…LLLL), 217–237 (ILPM…LDAF), and 272–292 (LGSA…FIFI). The ABC transmembrane type-1 domain occupies 85–291 (LAVTLAITAV…GCVAVIAFIF (207 aa)).

This sequence belongs to the binding-protein-dependent transport system permease family. In terms of assembly, the complex is composed of two ATP-binding proteins (SugC), two transmembrane proteins (Suga and SugB) and a solute-binding protein (LpqY).

The protein resides in the cell inner membrane. Functionally, part of the ABC transporter complex LpqY-SugA-SugB-SugC, which is highly specific for uptake of trehalose. Involved in the recycling of extracellular trehalose released from trehalose-containing molecules synthesized by M.tuberculosis. Trehalose uptake is essential for virulence. Probably responsible for the translocation of the substrate across the membrane. The sequence is that of Trehalose transport system permease protein SugA (sugA) from Mycobacterium tuberculosis (strain CDC 1551 / Oshkosh).